The sequence spans 746 residues: MLGDSRDLFRPKTSDIPAKPGVYKWRDGEGRVIYVGKAKNLRNRLTNYFQPLYLLHPRTQTMVLTARSLEWTVVATELESLTLEYTWIKEFDPRFNVQFRDDKTYPYLAVSTGERIPRVWVTRSRKRRDTRYFGPYAKVWELRHSLDRLLRTFPVRTCTTNVFHKAQLTGRPCLFASIGKCSAPCVNRIEADEHRRLCEQLVGVMTGRLGRPYIAQLTRDMKEASAELEFEKAARLRDQIQMLETVVQQNAVVFDQDVDADVFGFASDELEASVHAFYVRAGSIRGERNWSVERVEDIDDADLMADLLVQVYSDAAGDNHPQSAATISTNREAIGSTQTITATDAVARAQATRERNTRQETTGRADLLAPIAPVPREIIVPVEPARREELEGWLTNLRGGAVTIRVASRGDKKQLMDRANENASQALQRSKMSRISDMGARTQAMNDVAKALGLAEAPLRIECYDISNTVGGAFQVASMVVFEDAIAKKSEYRRFAIRGKDGKGAVDDLSALYETLTRRFKHGNIAGDSGESIDAEQRVASAAGKMTTAVAAETIAANGNDNGEGGSDISGKGHAVPVGVQNDARESPPDIVQQNTNRHHFAYKPNLVVVDGGKPQVMAAAKALEDCGVNDVAVCGLAKRLEEVWVPDDDYPIILKRQSEGMYLLQRVRDESHRFAITYHRQQRRKGALRSALDEIPGIGESYQKRLLNHFGSVKAMREASVEDFEKVKGIGHAKAEALYNALHEQ.

The GIY-YIG domain occupies 18 to 97 (AKPGVYKWRD…IKEFDPRFNV (80 aa)). Positions 211–246 (RPYIAQLTRDMKEASAELEFEKAARLRDQIQMLETV) constitute a UVR domain. The disordered stretch occupies residues 557–577 (ANGNDNGEGGSDISGKGHAVP).

It belongs to the UvrC family. In terms of assembly, interacts with UvrB in an incision complex.

Its subcellular location is the cytoplasm. In terms of biological role, the UvrABC repair system catalyzes the recognition and processing of DNA lesions. UvrC both incises the 5' and 3' sides of the lesion. The N-terminal half is responsible for the 3' incision and the C-terminal half is responsible for the 5' incision. This is UvrABC system protein C from Bifidobacterium longum (strain NCC 2705).